The sequence spans 274 residues: Copper chaperone for superoxide dismutase (274 aa).

Residues 11 to 74 (LCTLEFAVQM…LLEGTGRQAV (64 aa)) form the HMA domain. Residues C22 and C25 each coordinate Cu cation. A Glycyl lysine isopeptide (Lys-Gly) (interchain with G-Cter in ubiquitin) cross-link involves residue K76. Residues 88–234 (AAVAILGGPG…LACGIIARSA (147 aa)) are superoxide dismutase-like. An intrachain disulfide couples C141 to C227. Zn(2+) contacts are provided by H147, H155, H164, and D167. Residues K189, K216, and K241 each participate in a glycyl lysine isopeptide (Lys-Gly) (interchain with G-Cter in ubiquitin) cross-link. The Cu cation site is built by C244 and C246. Position 267 is a phosphoserine (S267).

It in the C-terminal section; belongs to the Cu-Zn superoxide dismutase family. Homodimer, and heterodimer with SOD1. Interacts with COMMD1. Interacts with XIAP/BIRC4. Interacts with SLC31A1(via C-terminal domain); this interaction is Cu(1+)-mediated. The heterodimer CCS:SOD1 interacts with SLC31A1; this heterotrimer is Cu(1+)-mediated and its maintenance is regulated through SOD1 activation. The cofactor is Cu(2+). It depends on Zn(2+) as a cofactor. Ubiquitinion by XIAP/BIRC4 leads to enhancement of its chaperone activity toward its physiologic target, SOD1, rather than proteasomal degradation. XIAP/BIRC4 preferentially ubiquitinates at Lys-241. In terms of tissue distribution, ubiquitous.

The protein localises to the cytoplasm. Its function is as follows. Delivers copper to copper zinc superoxide dismutase (SOD1). In Homo sapiens (Human), this protein is Copper chaperone for superoxide dismutase.